The sequence spans 440 residues: Chromosomal replication initiator protein DnaA (440 aa).

The domain I, interacts with DnaA modulators stretch occupies residues 1-75 (MNPNQILENL…QSGNKASVLI (75 aa)). Residues 75 to 99 (IQAQSAKQSSKSTKIDIAHIKAQST) are domain II. The tract at residues 100-316 (ILNPSFTFES…GIIISLNAYA (217 aa)) is domain III, AAA+ region. ATP contacts are provided by Gly146, Gly148, Lys149, and Thr150. Residues 317–440 (TILGQEITLE…KNKILVKSQS (124 aa)) are domain IV, binds dsDNA.

This sequence belongs to the DnaA family. As to quaternary structure, oligomerizes as a right-handed, spiral filament on DNA at oriC.

The protein localises to the cytoplasm. Its function is as follows. Plays an essential role in the initiation and regulation of chromosomal replication. ATP-DnaA binds to the origin of replication (oriC) to initiate formation of the DNA replication initiation complex once per cell cycle. Binds the DnaA box (a 9 base pair repeat at the origin) and separates the double-stranded (ds)DNA. Forms a right-handed helical filament on oriC DNA; dsDNA binds to the exterior of the filament while single-stranded (ss)DNA is stabiized in the filament's interior. The ATP-DnaA-oriC complex binds and stabilizes one strand of the AT-rich DNA unwinding element (DUE), permitting loading of DNA polymerase. After initiation quickly degrades to an ADP-DnaA complex that is not apt for DNA replication. Binds acidic phospholipids. The sequence is that of Chromosomal replication initiator protein DnaA from Campylobacter jejuni subsp. jejuni serotype O:6 (strain 81116 / NCTC 11828).